We begin with the raw amino-acid sequence, 294 residues long: ATP synthase gamma chain (294 aa).

The protein belongs to the ATPase gamma chain family. In terms of assembly, F-type ATPases have 2 components, CF(1) - the catalytic core - and CF(0) - the membrane proton channel. CF(1) has five subunits: alpha(3), beta(3), gamma(1), delta(1), epsilon(1). CF(0) has three main subunits: a, b and c.

It localises to the cell inner membrane. Its function is as follows. Produces ATP from ADP in the presence of a proton gradient across the membrane. The gamma chain is believed to be important in regulating ATPase activity and the flow of protons through the CF(0) complex. The protein is ATP synthase gamma chain of Rhizobium etli (strain CIAT 652).